Consider the following 302-residue polypeptide: Light-independent protochlorophyllide reductase iron-sulfur ATP-binding protein (302 aa).

Residues 46–51 (GIGKST) and lysine 75 contribute to the ATP site. Serine 50 lines the Mg(2+) pocket. Cysteine 131 and cysteine 165 together coordinate [4Fe-4S] cluster. Position 216–217 (216–217 (NR)) interacts with ATP.

Belongs to the NifH/BchL/ChlL family. Homodimer. Protochlorophyllide reductase is composed of three subunits; BchL, BchN and BchB. It depends on [4Fe-4S] cluster as a cofactor.

It catalyses the reaction chlorophyllide a + oxidized 2[4Fe-4S]-[ferredoxin] + 2 ADP + 2 phosphate = protochlorophyllide a + reduced 2[4Fe-4S]-[ferredoxin] + 2 ATP + 2 H2O. The protein operates within porphyrin-containing compound metabolism; bacteriochlorophyll biosynthesis (light-independent). Component of the dark-operative protochlorophyllide reductase (DPOR) that uses Mg-ATP and reduced ferredoxin to reduce ring D of protochlorophyllide (Pchlide) to form chlorophyllide a (Chlide). This reaction is light-independent. The L component serves as a unique electron donor to the NB-component of the complex, and binds Mg-ATP. This is Light-independent protochlorophyllide reductase iron-sulfur ATP-binding protein from Methylocella silvestris (strain DSM 15510 / CIP 108128 / LMG 27833 / NCIMB 13906 / BL2).